Here is a 283-residue protein sequence, read N- to C-terminus: Pantothenate synthetase (283 aa).

ATP is bound at residue 34–41 (MGALHDGH). Catalysis depends on His41, which acts as the Proton donor. Gln65 contacts (R)-pantoate. A beta-alanine-binding site is contributed by Gln65. 152–155 (GQKD) contributes to the ATP binding site. Residue Gln158 coordinates (R)-pantoate. Residues Val181 and 189–192 (MSSR) contribute to the ATP site.

It belongs to the pantothenate synthetase family. Homodimer.

It localises to the cytoplasm. The enzyme catalyses (R)-pantoate + beta-alanine + ATP = (R)-pantothenate + AMP + diphosphate + H(+). It functions in the pathway cofactor biosynthesis; (R)-pantothenate biosynthesis; (R)-pantothenate from (R)-pantoate and beta-alanine: step 1/1. Its function is as follows. Catalyzes the condensation of pantoate with beta-alanine in an ATP-dependent reaction via a pantoyl-adenylate intermediate. This chain is Pantothenate synthetase, found in Nitrobacter hamburgensis (strain DSM 10229 / NCIMB 13809 / X14).